Consider the following 134-residue polypeptide: Profilin-1 (134 aa).

Cysteine 13 and cysteine 118 form a disulfide bridge. Positions 84–100 (AVIRGKKGSGGITTKKT) match the Involved in PIP2 interaction motif. A Phosphothreonine modification is found at threonine 114.

It belongs to the profilin family. Occurs in many kinds of cells as a complex with monomeric actin in a 1:1 ratio. Phosphorylated by MAP kinases.

It is found in the cytoplasm. It localises to the cytoskeleton. Functionally, binds to actin and affects the structure of the cytoskeleton. At high concentrations, profilin prevents the polymerization of actin, whereas it enhances it at low concentrations. This chain is Profilin-1, found in Olea europaea (Common olive).